The primary structure comprises 332 residues: Small ribosomal subunit biogenesis GTPase RsgA (332 aa).

A CP-type G domain is found at 103–259; sequence RQQLIAANLD…LIDTPGMREL (157 aa). GTP-binding positions include 148-151 and 201-209; these read TKVD and GSSGAGKST. Residues Cys281, Cys286, His288, and Cys294 each contribute to the Zn(2+) site.

Belongs to the TRAFAC class YlqF/YawG GTPase family. RsgA subfamily. As to quaternary structure, monomer. Associates with 30S ribosomal subunit, binds 16S rRNA. The cofactor is Zn(2+).

It localises to the cytoplasm. Functionally, one of several proteins that assist in the late maturation steps of the functional core of the 30S ribosomal subunit. Helps release RbfA from mature subunits. May play a role in the assembly of ribosomal proteins into the subunit. Circularly permuted GTPase that catalyzes slow GTP hydrolysis, GTPase activity is stimulated by the 30S ribosomal subunit. The sequence is that of Small ribosomal subunit biogenesis GTPase RsgA from Xylella fastidiosa (strain M12).